The sequence spans 185 residues: uncharacterized protein (185 aa).

As to expression, component of the acid-insoluble and acid-soluble organic matrix of calcified layers of the shell (at protein level).

The protein resides in the secreted. This is an uncharacterized protein from Lottia gigantea (Giant owl limpet).